The chain runs to 461 residues: Deoxyguanosinetriphosphate triphosphohydrolase-like protein (461 aa).

The disordered stretch occupies residues 22–41 (ERFLPDPPREKDNRPPFRRD). Positions 24 to 41 (FLPDPPREKDNRPPFRRD) are enriched in basic and acidic residues. The region spanning 72 to 285 (RLTHSLEVAQ…MELADDIAYG (214 aa)) is the HD domain.

This sequence belongs to the dGTPase family. Type 2 subfamily.

This chain is Deoxyguanosinetriphosphate triphosphohydrolase-like protein, found in Haemophilus influenzae (strain PittEE).